The chain runs to 240 residues: Uridylate kinase (240 aa).

Lys-12–Gly-15 contacts ATP. Position 54 (Gly-54) interacts with UMP. ATP contacts are provided by Gly-55 and Arg-59. UMP contacts are provided by residues Asp-74 and Thr-135–Thr-142. ATP is bound by residues Thr-162, Tyr-168, and Asp-171.

Belongs to the UMP kinase family. As to quaternary structure, homohexamer.

The protein resides in the cytoplasm. The enzyme catalyses UMP + ATP = UDP + ADP. Its pathway is pyrimidine metabolism; CTP biosynthesis via de novo pathway; UDP from UMP (UMPK route): step 1/1. Inhibited by UTP. Functionally, catalyzes the reversible phosphorylation of UMP to UDP. The polypeptide is Uridylate kinase (Xanthomonas euvesicatoria pv. vesicatoria (strain 85-10) (Xanthomonas campestris pv. vesicatoria)).